A 612-amino-acid chain; its full sequence is Actin-binding LIM protein 2 (612 aa).

LIM zinc-binding domains lie at 22–81 (ILCN…LYGT), 81–141 (TRCF…TLLG), 151–210 (RSCG…KFGI), and 210–270 (IRCD…ARTE). Positions 83, 86, 103, 106, 109, 112, 131, and 134 each coordinate Zn(2+). Residues cysteine 212, cysteine 215, histidine 232, cysteine 235, cysteine 238, cysteine 241, histidine 260, and cysteine 263 each contribute to the Zn(2+) site. Residues 269–278 (TEDKSKETRT) show a composition bias toward basic and acidic residues. Disordered stretches follow at residues 269 to 295 (TEDK…SGSP) and 341 to 433 (AVGD…DNIY). Residues 279–295 (SSESIVSVPASSTSGSP) are compositionally biased toward low complexity. Residues serine 282, serine 294, glycine 351, arginine 356, serine 365, and serine 368 each carry the phosphoserine modification. Low complexity predominate over residues 364–373 (SSPSSAGSVS). The segment covering 394–416 (SGRSTPSLSVHSDSRPPSSTYQQ) has biased composition (polar residues). Serine 453 carries the post-translational modification Phosphoserine. Positions 471 to 498 (ADTRTNSPDLDSQSLSLSSGTDQEPLQR) are disordered. Phosphothreonine is present on threonine 473. Residues serine 477 and serine 579 each carry the phosphoserine modification. Positions 477 to 489 (SPDLDSQSLSLSS) are enriched in low complexity. An HP domain is found at 544–612 (TREYKIYPYD…NDLKKKALLF (69 aa)).

As to quaternary structure, interacts with F-actin and ABRA. In terms of tissue distribution, expressed in brain. Highly expressed in caudate/putamen, moderately expressed in the olfactory bulb. In the hippocampus, expressed in the CA1, CA2 and CA3 fields. In the cerebellum, expressed in Purkinje cells.

The protein resides in the cytoplasm. Its function is as follows. May act as scaffold protein. May stimulate ABRA activity and ABRA-dependent SRF transcriptional activity. The protein is Actin-binding LIM protein 2 (Ablim2) of Mus musculus (Mouse).